A 612-amino-acid chain; its full sequence is tRNA uridine 5-carboxymethylaminomethyl modification enzyme MnmG (612 aa).

Residue 9-14 (GAGHAG) participates in FAD binding. 270-284 (GPLYCPSIEDKVFKF) is an NAD(+) binding site.

This sequence belongs to the MnmG family. Homodimer. Heterotetramer of two MnmE and two MnmG subunits. It depends on FAD as a cofactor.

It is found in the cytoplasm. Its function is as follows. NAD-binding protein involved in the addition of a carboxymethylaminomethyl (cmnm) group at the wobble position (U34) of certain tRNAs, forming tRNA-cmnm(5)s(2)U34. This is tRNA uridine 5-carboxymethylaminomethyl modification enzyme MnmG from Mycoplasma genitalium (strain ATCC 33530 / DSM 19775 / NCTC 10195 / G37) (Mycoplasmoides genitalium).